We begin with the raw amino-acid sequence, 659 residues long: MTEKLSEQLQQLGEQNLEEKADYNMRYYKYLYKKSIEEPDKFWGELAEELITWYEPWKQAFVQEEGLLTKWFVGGKLNASYNAVDRHLNSHRKYKAAIFWESEKGEKKVVTYQDLFYEVNKWANALRELGVKKGDRVTIYMPLTPEGVIAKLAVARLGAIHSVVFAGFGAQALADRIADAGAKVVITADAYYRRGKLVELKKTVDEALNILGDKSPVQKVLVYKRTGTEIPFKEGRDVYFDEVGKYKYIEPVPVEATEPLFILYTSGTTGKPKGIVHSTGGYLVGTAVMLLWSYGLSQENDVLFNTSDIGWIVGHSYITYSPLVMGRSIVIYESAPDYPYPDKWAEMIEKYRATTFGTSATAIRTLMKYGEDYVKQHDLSSLRIIVTNGEPLNYAPWKWGLEVVGGGKVFMSHQWWQTETGGPNIGYIPGVVYLPMKSGPAVGFALPGNKVTVVNEEGKETKPRERGYLVMLPPFPPMMMIGMWNDPDNERLKKTYFSKFPGIYYPGDYAMIDEDGYIWVMGRADETIKVAAHRIGAGEVESIVTSHPAVAEAAAVGIPDPVKGEAVHLFVVLKVGYKPSPQLAREIQEHVRKYMGAIVTPEVHFVDKLPKTRSGKIMRRVIKAVMMGQSAGDITTLEDEASMDEIKKAVEEFKKSLSQ.

Residue D525 is part of the active site. K616 carries the post-translational modification N6-acetyllysine.

It belongs to the ATP-dependent AMP-binding enzyme family.

It carries out the reaction 3-hydroxypropanoate + ATP + CoA = 3-hydroxypropanoyl-CoA + AMP + diphosphate. Plays a role in the autotrophic CO(2) fixation pathway. Activates 3-hydroxypropionate to its CoA ester. Can also activate propionate, and to a lesser extent acrylate, acetate and butyrate. The polypeptide is 3-hydroxypropionyl-coenzyme A synthetase (Sulfurisphaera tokodaii (strain DSM 16993 / JCM 10545 / NBRC 100140 / 7) (Sulfolobus tokodaii)).